Here is a 498-residue protein sequence, read N- to C-terminus: MATNTITTTKVTTTTTDVTGLSLIAAHSHISGLGLDDNLQPKENAQGMVGQLSARKAAGVILKMVEAGKIAGRAVLIAGPPSTGKTAIAMGLSQSLGNQVPFTALAASEVFSLELSKTEALTQAFRKSIGIKIKEETEIIEGEVVEIQIDRTITGGHKQGKLTIKTTDMETIYELGNKMIEGLTKEKVLAGDVISIDKASGKITKLGRSFTRARDYDAMGPETKFVQCPEGELQKRKEVVHTISLHEIDVINSRQQGFLALFSGDTGEIRPEVRDQINTKVAEWKEEGKAEIVPGVLFIDEVHMLDIECFSFINRALEDEFSPIVIMATNRGVSRIRGTDYKSPHGMPMDLLDRSITIHTTSYTADEIRTILSIRATEEEVELSGDALALLTKIGQETSLRYAANLISVSQQIALKKKNNTVDLQDIKRAYMLFLDSDRSVQYLEENADQYIDDYGRVTIGQESTDGSTQPQAKQQEVAQPEATQPQSQPEDDKMETD.

79-86 contacts ATP; the sequence is GPPSTGKT. Residues 458-498 are disordered; it reads VTIGQESTDGSTQPQAKQQEVAQPEATQPQSQPEDDKMETD. Polar residues predominate over residues 461-489; sequence GQESTDGSTQPQAKQQEVAQPEATQPQSQ.

Belongs to the RuvB family. In terms of assembly, may form heterododecamers with RVB1. Component of the SWR1 chromatin remodeling complex, the INO80 chromatin remodeling complex, and of the R2TP complex.

Its subcellular location is the nucleus. It carries out the reaction ATP + H2O = ADP + phosphate + H(+). Its function is as follows. DNA helicase which participates in several chromatin remodeling complexes, including the SWR1 and the INO80 complexes. The SWR1 complex mediates the ATP-dependent exchange of histone H2A for the H2A variant HZT1 leading to transcriptional regulation of selected genes by chromatin remodeling. The INO80 complex remodels chromatin by shifting nucleosomes and is involved in DNA repair. Also involved in pre-rRNA processing. In Candida albicans (strain SC5314 / ATCC MYA-2876) (Yeast), this protein is RuvB-like helicase 2 (RVB2).